Reading from the N-terminus, the 155-residue chain is Small ribosomal subunit protein uS7cz/uS7cy (155 aa).

Belongs to the universal ribosomal protein uS7 family. As to quaternary structure, part of the 30S ribosomal subunit.

It is found in the plastid. Its subcellular location is the chloroplast. In terms of biological role, one of the primary rRNA binding proteins, it binds directly to 16S rRNA where it nucleates assembly of the head domain of the 30S subunit. This chain is Small ribosomal subunit protein uS7cz/uS7cy (rps7-A), found in Angiopteris evecta (Mule's foot fern).